Consider the following 1417-residue polypeptide: Cytoadherence-linked asexual protein 3.1 (1417 aa).

The N-terminal stretch at 1 to 24 is a signal peptide; it reads MVSFFKTPIFILIIFLYLNEKVIC. Cystine bridges form between cysteine 333–cysteine 361, cysteine 407–cysteine 413, cysteine 517–cysteine 545, and cysteine 521–cysteine 542. The helical transmembrane segment at 1204–1224 threads the bilayer; the sequence is LVNGFMYAFCFFAISQMYAYF. The tract at residues 1383–1417 is disordered; the sequence is TYIDTEKMNEADSADSDDEKDSDTPDDELMISRFH. The segment covering 1394-1411 has biased composition (acidic residues); it reads DSADSDDEKDSDTPDDEL.

As to quaternary structure, self-associates. Component of the RhopH complex. RhopH complex is at least composed of CLAG3.1/CLAG3.2, RhopH2 and RhopH3 with a 1:1:1 subunit stoichiometry. CLAG3.1/CLAG3.2 mediates subunit association through independent contacts with RhopH2 and RhopH3, which do not directly interact with one another. Interacts with RhopH2. Interacts with RhopH3.

It is found in the host cell membrane. The protein localises to the host cytoplasm. Its subcellular location is the cytoplasmic vesicle. It localises to the secretory vesicle. The protein resides in the rhoptry. In terms of biological role, participates in the formation of new permeability pathways in Plasmodium-infected erythrocytes enabling the uptake of nutrients from the blood plasma. This is Cytoadherence-linked asexual protein 3.1 from Plasmodium falciparum (isolate 3D7).